Here is a 126-residue protein sequence, read N- to C-terminus: Large ribosomal subunit protein bL19 (126 aa).

It belongs to the bacterial ribosomal protein bL19 family.

In terms of biological role, this protein is located at the 30S-50S ribosomal subunit interface and may play a role in the structure and function of the aminoacyl-tRNA binding site. The sequence is that of Large ribosomal subunit protein bL19 from Nitrobacter winogradskyi (strain ATCC 25391 / DSM 10237 / CIP 104748 / NCIMB 11846 / Nb-255).